The sequence spans 566 residues: Proline--tRNA ligase (566 aa).

This sequence belongs to the class-II aminoacyl-tRNA synthetase family. ProS type 1 subfamily. Homodimer.

It localises to the cytoplasm. It catalyses the reaction tRNA(Pro) + L-proline + ATP = L-prolyl-tRNA(Pro) + AMP + diphosphate. In terms of biological role, catalyzes the attachment of proline to tRNA(Pro) in a two-step reaction: proline is first activated by ATP to form Pro-AMP and then transferred to the acceptor end of tRNA(Pro). As ProRS can inadvertently accommodate and process non-cognate amino acids such as alanine and cysteine, to avoid such errors it has two additional distinct editing activities against alanine. One activity is designated as 'pretransfer' editing and involves the tRNA(Pro)-independent hydrolysis of activated Ala-AMP. The other activity is designated 'posttransfer' editing and involves deacylation of mischarged Ala-tRNA(Pro). The misacylated Cys-tRNA(Pro) is not edited by ProRS. The polypeptide is Proline--tRNA ligase (Staphylococcus saprophyticus subsp. saprophyticus (strain ATCC 15305 / DSM 20229 / NCIMB 8711 / NCTC 7292 / S-41)).